The primary structure comprises 455 residues: Chromosomal replication initiator protein DnaA (455 aa).

The domain I, interacts with DnaA modulators stretch occupies residues 1–75 (MDTNNNIEKE…EILSQNKVGM (75 aa)). The domain II stretch occupies residues 75–106 (MHLAHSVDVRIEVAPKIQINAQANINYKAIKT). The domain III, AAA+ region stretch occupies residues 107 to 321 (SVKDSYTFEN…GAIIKISVNA (215 aa)). The ATP site is built by Gly-151, Gly-153, Lys-154, and Thr-155. The interval 322 to 455 (NLMNAPIDLN…DKKTAFNSSE (134 aa)) is domain IV, binds dsDNA.

The protein belongs to the DnaA family. Oligomerizes as a right-handed, spiral filament on DNA at oriC.

It is found in the cytoplasm. In terms of biological role, plays an essential role in the initiation and regulation of chromosomal replication. ATP-DnaA binds to the origin of replication (oriC) to initiate formation of the DNA replication initiation complex once per cell cycle. Binds the DnaA box (a 9 base pair repeat at the origin) and separates the double-stranded (ds)DNA. Forms a right-handed helical filament on oriC DNA; dsDNA binds to the exterior of the filament while single-stranded (ss)DNA is stabiized in the filament's interior. The ATP-DnaA-oriC complex binds and stabilizes one strand of the AT-rich DNA unwinding element (DUE), permitting loading of DNA polymerase. After initiation quickly degrades to an ADP-DnaA complex that is not apt for DNA replication. Binds acidic phospholipids. This chain is Chromosomal replication initiator protein DnaA, found in Helicobacter pylori (strain G27).